The primary structure comprises 463 residues: Type IV secretion system protein PtlD homolog (463 aa).

The signal sequence occupies residues 1-24 (MAGLSRILLSCTLACLLAGQAAQA). Helical transmembrane passes span 118–138 (LQPL…YALL), 232–252 (WLLC…LAAS), 253–273 (LLIV…LFLV), 294–314 (ALVF…VLAG), and 333–353 (MLAA…VPLA). A compositionally biased stretch (low complexity) spans 376–410 (AHRQAAARQYAPRPAAAAAAAGPHQAGTYAASATP). The interval 376-463 (AHRQAAARQY…RVLPRKPNLP (88 aa)) is disordered. Residues 411–420 (APAPARPAPS) show a composition bias toward pro residues. The span at 441 to 455 (VRRDDRPAPAPDRRV) shows a compositional bias: basic and acidic residues.

The protein resides in the cell membrane. This Bordetella parapertussis (strain 12822 / ATCC BAA-587 / NCTC 13253) protein is Type IV secretion system protein PtlD homolog (ptlD).